A 117-amino-acid chain; its full sequence is Immunoglobulin heavy variable 1-69 (117 aa).

An N-terminal signal peptide occupies residues 1 to 19 (MDWTWRFLFVVAAATGVQS). Residue glutamine 20 is modified to Pyrrolidone carboxylic acid. The interval 20–44 (QVQLVQSGAEVKKPGSSVKVSCKAS) is framework-1. In terms of domain architecture, Ig-like spans 20–117 (QVQLVQSGAE…EDTAVYYCAR (98 aa)). A disulfide bridge connects residues cysteine 41 and cysteine 115. Positions 45–52 (GGTFSSYA) are complementarity-determining-1. Residues 53-69 (ISWVRQAPGQGLEWMGG) are framework-2. The complementarity-determining-2 stretch occupies residues 70-77 (IIPIFGTA). Residues 78-115 (NYAQKFQGRVTITADKSTSTAYMELSSLRSEDTAVYYC) form a framework-3 region. Residues 116 to 117 (AR) are complementarity-determining-3.

In terms of assembly, immunoglobulins are composed of two identical heavy chains and two identical light chains; disulfide-linked.

It localises to the secreted. The protein localises to the cell membrane. Functionally, v region of the variable domain of immunoglobulin heavy chains that participates in the antigen recognition. Immunoglobulins, also known as antibodies, are membrane-bound or secreted glycoproteins produced by B lymphocytes. In the recognition phase of humoral immunity, the membrane-bound immunoglobulins serve as receptors which, upon binding of a specific antigen, trigger the clonal expansion and differentiation of B lymphocytes into immunoglobulins-secreting plasma cells. Secreted immunoglobulins mediate the effector phase of humoral immunity, which results in the elimination of bound antigens. The antigen binding site is formed by the variable domain of one heavy chain, together with that of its associated light chain. Thus, each immunoglobulin has two antigen binding sites with remarkable affinity for a particular antigen. The variable domains are assembled by a process called V-(D)-J rearrangement and can then be subjected to somatic hypermutations which, after exposure to antigen and selection, allow affinity maturation for a particular antigen. This Homo sapiens (Human) protein is Immunoglobulin heavy variable 1-69.